The chain runs to 1064 residues: DNA-directed RNA polymerase subunit beta (1064 aa).

The protein belongs to the RNA polymerase beta chain family. In terms of assembly, in plastids the minimal PEP RNA polymerase catalytic core is composed of four subunits: alpha, beta, beta', and beta''. When a (nuclear-encoded) sigma factor is associated with the core the holoenzyme is formed, which can initiate transcription.

Its subcellular location is the plastid. The protein localises to the chloroplast. It carries out the reaction RNA(n) + a ribonucleoside 5'-triphosphate = RNA(n+1) + diphosphate. DNA-dependent RNA polymerase catalyzes the transcription of DNA into RNA using the four ribonucleoside triphosphates as substrates. This is DNA-directed RNA polymerase subunit beta from Jasminum nudiflorum (Winter jasmine).